Here is a 445-residue protein sequence, read N- to C-terminus: 6-phosphogluconate dehydrogenase, decarboxylating (445 aa).

NADP(+)-binding positions include 1-4 (AVMG), 22-24 (NRS), 63-65 (VKA), and Asn91. Substrate-binding positions include Asn91 and 117–119 (SGG). Lys172 functions as the Proton acceptor in the catalytic mechanism. 175–176 (HN) lines the substrate pocket. Residue Glu179 is the Proton donor of the active site. Tyr180, Lys249, Arg276, Arg434, and His440 together coordinate substrate.

The protein belongs to the 6-phosphogluconate dehydrogenase family. As to quaternary structure, homodimer.

It carries out the reaction 6-phospho-D-gluconate + NADP(+) = D-ribulose 5-phosphate + CO2 + NADPH. It participates in carbohydrate degradation; pentose phosphate pathway; D-ribulose 5-phosphate from D-glucose 6-phosphate (oxidative stage): step 3/3. Functionally, catalyzes the oxidative decarboxylation of 6-phosphogluconate to ribulose 5-phosphate and CO(2), with concomitant reduction of NADP to NADPH. The sequence is that of 6-phosphogluconate dehydrogenase, decarboxylating (gnd) from Raoultella planticola (Klebsiella planticola).